A 357-amino-acid polypeptide reads, in one-letter code: MKGNVLIMAGGTGGHVFPALACAREFQARGYAVHWLGTPRGIENDLVPKAGLPLHLIQVSGLRGKGLKSLVKAPLELLKSLFQALRVIRQLRPVCVLGLGGYVTGPGGLAARLNGVPLVIHEQNAVAGTANRSLAPIARRVCEAFPDTFPASDKRLTTGNPVRGELFLDAHARAPLTGRRVNLLVLGGSLGAEPLNKLLPEALAQVPLEIRPAIRHQAGRQHAEITAERYRTVAVEADVAPFISDMAAAYAWADLVICRAGALTVSELAAAGLPAFLVPLPHAIDDHQTRNAEFLVRSGAGRLLPQKSTGAAELAAQLSEVLMHPETLRSMADQARSLAKPEATRTVVDACLEVARG.

Residues 12–14, asparagine 124, arginine 163, serine 189, isoleucine 243, 262–267, and glutamine 288 contribute to the UDP-N-acetyl-alpha-D-glucosamine site; these read TGG and ALTVSE.

This sequence belongs to the glycosyltransferase 28 family. MurG subfamily.

It is found in the cell inner membrane. It carries out the reaction di-trans,octa-cis-undecaprenyl diphospho-N-acetyl-alpha-D-muramoyl-L-alanyl-D-glutamyl-meso-2,6-diaminopimeloyl-D-alanyl-D-alanine + UDP-N-acetyl-alpha-D-glucosamine = di-trans,octa-cis-undecaprenyl diphospho-[N-acetyl-alpha-D-glucosaminyl-(1-&gt;4)]-N-acetyl-alpha-D-muramoyl-L-alanyl-D-glutamyl-meso-2,6-diaminopimeloyl-D-alanyl-D-alanine + UDP + H(+). It functions in the pathway cell wall biogenesis; peptidoglycan biosynthesis. Its function is as follows. Cell wall formation. Catalyzes the transfer of a GlcNAc subunit on undecaprenyl-pyrophosphoryl-MurNAc-pentapeptide (lipid intermediate I) to form undecaprenyl-pyrophosphoryl-MurNAc-(pentapeptide)GlcNAc (lipid intermediate II). In Pseudomonas paraeruginosa (strain DSM 24068 / PA7) (Pseudomonas aeruginosa (strain PA7)), this protein is UDP-N-acetylglucosamine--N-acetylmuramyl-(pentapeptide) pyrophosphoryl-undecaprenol N-acetylglucosamine transferase.